A 23-amino-acid chain; its full sequence is Basic phospholipase A2 homolog CTs-K49c (23 aa).

Contains 7 disulfide bonds. As to expression, expressed by the venom gland.

Its subcellular location is the secreted. Its function is as follows. Snake venom phospholipase A2 homolog that lacks catalytic activity. Shows myotoxic activities. Induces local edema a few hours after injection (5-10 ug) in the hind paw. In Trimeresurus stejnegeri (Chinese green tree viper), this protein is Basic phospholipase A2 homolog CTs-K49c.